The sequence spans 291 residues: Meteorin (291 aa).

The signal sequence occupies residues 1–21 (MLVAALLCALCCGLLAASARA). 5 cysteine pairs are disulfide-bonded: Cys-28–Cys-49, Cys-80–Cys-116, Cys-169–Cys-240, Cys-172–Cys-264, and Cys-182–Cys-286.

It belongs to the meteorin family. In terms of assembly, monomer.

Its subcellular location is the secreted. Functionally, involved in both glial cell differentiation and axonal network formation during neurogenesis. Promotes astrocyte differentiation and transforms cerebellar astrocytes into radial glia. Also induces axonal extension in small and intermediate neurons of sensory ganglia by activating nearby satellite glia. The protein is Meteorin (Metrn) of Rattus norvegicus (Rat).